The chain runs to 781 residues: Putative amine oxidase [copper-containing] (781 aa).

The first 34 residues, 1-34, serve as a signal peptide directing secretion; it reads MSLPKTANGMDKLKLCYLLLFYLGSSSLTEVSGA. Residues Cys199 and Cys203 are joined by a disulfide bond. 385 to 395 serves as a coordination point for substrate; sequence FFDSSYMIGMN. Asp387 functions as the Proton acceptor in the catalytic mechanism. Cysteines 405 and 432 form a disulfide. Position 472–477 (472–477) interacts with substrate; that stretch reads IANYDY. Residue Tyr475 is the Schiff-base intermediate with substrate; via topaquinone of the active site. 2',4',5'-topaquinone is present on Tyr475. Cu cation is bound by residues His525 and His527. Positions 534, 536, 579, 671, 674, 676, 682, and 683 each coordinate Ca(2+). Positions 534 and 536 each coordinate Mn(2+). Residue Asp682 coordinates Mn(2+). His693 is a Cu cation binding site.

Belongs to the copper/topaquinone oxidase family. In terms of assembly, homodimer. Cu cation serves as cofactor. It depends on Ca(2+) as a cofactor. Requires L-topaquinone as cofactor. The cofactor is Mn(2+). In terms of processing, topaquinone (TPQ) is generated by copper-dependent autoxidation of a specific tyrosyl residue. Prismatic layer of shell (at protein level). Expressed primarily in the mantle with highest level in the mantle edge and lower level in the mantle pallium.

It localises to the secreted. The polypeptide is Putative amine oxidase [copper-containing] (Margaritifera margaritifera (Freshwater pearl mussel)).